A 1403-amino-acid chain; its full sequence is E3 ubiquitin-protein ligase SNT2 (1403 aa).

A disordered region spans residues 40-62; sequence SGAKTKGSNSQTPRNCKRTSNPA. Over residues 45–62 the composition is skewed to polar residues; the sequence is KGSNSQTPRNCKRTSNPA. One can recognise a BAH domain in the interval 121-258; it reads VLLSANDTIY…RYTLKYYKVY (138 aa). The PHD-type 1 zinc finger occupies 317 to 369; the sequence is DKRCQFCKEWCIQKESLSCDECGVCAHLYCMDPPLDRKPNKDVVWTCFSCLQK. Residues 555–606 enclose the SANT domain; it reads LKEPSFTAVEIRKFEEAVEKFGSELRPVCEYVGTQPMSMIVRFYYNWKKTER. A PHD-type 2 zinc finger spans residues 1038 to 1097; that stretch reads RTFCSVCKEKFNDNDNYEVVCGNCGLTVHYFCYAIKLPKDMKKNTNLKTFKWLCDPCSND. The RING-type; degenerate zinc finger occupies 1041-1095; sequence CSVCKEKFNDNDNYEVVCGNCGLTVHYFCYAIKLPKDMKKNTNLKTFKWLCDPCS. The C2HC pre-PHD-type zinc-finger motif lies at 1105–1153; that stretch reads TYQCSMCPTKDYDYDRYRSQSFKICPDALKCTSLGTWVHLVCSLFNEDI. The PHD-type 3; degenerate zinc finger occupies 1177–1231; sequence FTCGVCRINGGGLVKCNKCQYRYHITCAQNSSNFKLMFEKKNMSVDTTLPCIKDV.

As to quaternary structure, component of the Snt2C complex composed of SNT2, ECM5 and RPD3. Interacts with the E2 ubiquitin-conjugating enzyme UBC4 and histones H3 and H4. Binding is enhanced to methylated histone H3K36me3.

It is found in the cytoplasm. The protein localises to the nucleus. The catalysed reaction is S-ubiquitinyl-[E2 ubiquitin-conjugating enzyme]-L-cysteine + [acceptor protein]-L-lysine = [E2 ubiquitin-conjugating enzyme]-L-cysteine + N(6)-ubiquitinyl-[acceptor protein]-L-lysine.. In terms of biological role, transcriptional regulator that, together with ECM5, recruits histone deacetylase RPD3 to a small number of promoters of stress-response genes in response to oxidative stress. Probable ubiquitin-protein ligase involved in the degradation-related ubiquitination of histones. Contributes to the post-translational regulation of histone protein levels by polyubiquitination of excess histones for subsequent degradation. The sequence is that of E3 ubiquitin-protein ligase SNT2 from Saccharomyces cerevisiae (strain ATCC 204508 / S288c) (Baker's yeast).